A 503-amino-acid chain; its full sequence is MTDKKYIVALDQGTTSSRAVVMDHDANIVSVSQREFEQIYPKPGWVEHDPMEIWASQSSTLVEALAKADINSDQIAAIGITNQRETVVVWERETGKPIYNAIVWQCRRTAEICEQLKRDGMEEYIRKATGLVVDPYFSGTKVKWILDHVEGSRERAKRGELLFGTVDTWLIWKMTQGRVHVTDYTNASRTMLFNIHDLDWDDKMLDALDIPRAMLPEVRKSSEVYGQTNIGGKGGTRIPIAGIAGDQQAALFGQLCVKEGMAKNTYGTGCFMLMNTGEKAVTSTHGLLTTIACGPRGEVNYALEGAVFMAGASIQWLRDEMKLISDAFDSEYFATKVKDTNGVYVVPAFTGLGAPYWDPYARGAIFGLTRGVNSNHIIRATLESIAFQTRDVLEAMQADSGIRLHALRVDGGAVANNFLMQFQSDILGTRVERPEVREVTALGAAYLAGLAVGFWQNLDELQEKAVIEREFRPGIETTERNYRYSGWKKAVKRALAWEEHDEA.

ADP is bound at residue threonine 14. ATP is bound by residues threonine 14, threonine 15, and serine 16. A sn-glycerol 3-phosphate-binding site is contributed by threonine 14. Arginine 18 contacts ADP. Residues arginine 84, glutamate 85, tyrosine 136, and aspartate 246 each contribute to the sn-glycerol 3-phosphate site. Glycerol-binding residues include arginine 84, glutamate 85, tyrosine 136, aspartate 246, and glutamine 247. Positions 268 and 311 each coordinate ADP. Positions 268, 311, 315, and 412 each coordinate ATP. The ADP site is built by glycine 412 and asparagine 416.

Belongs to the FGGY kinase family. In terms of assembly, homotetramer and homodimer (in equilibrium). Heterodimer with EIIA-Glc. Binds 1 zinc ion per glycerol kinase EIIA-Glc dimer. The zinc ion is important for dimerization.

It catalyses the reaction glycerol + ATP = sn-glycerol 3-phosphate + ADP + H(+). Its pathway is polyol metabolism; glycerol degradation via glycerol kinase pathway; sn-glycerol 3-phosphate from glycerol: step 1/1. With respect to regulation, activity of this regulatory enzyme is affected by several metabolites. Allosterically and non-competitively inhibited by fructose 1,6-bisphosphate (FBP) and unphosphorylated phosphocarrier protein EIIA-Glc (III-Glc), an integral component of the bacterial phosphotransferase (PTS) system. In terms of biological role, key enzyme in the regulation of glycerol uptake and metabolism. Catalyzes the phosphorylation of glycerol to yield sn-glycerol 3-phosphate. In Klebsiella pneumoniae subsp. pneumoniae (strain ATCC 700721 / MGH 78578), this protein is Glycerol kinase.